Reading from the N-terminus, the 328-residue chain is Aryl-hydrocarbon-interacting protein-like 1 (328 aa).

Positions 53-145 (KQVGQPMSII…DLDELQKEPQ (93 aa)) constitute a PPIase FKBP-type domain. 3 TPR repeats span residues 178–211 (VPLLHGEGNRLYKLGRYDQAATKYQEAIVCLRNL), 230–263 (NTLILNYCQCLLKKEEYYEVLEHTSDILRHHPGI), and 264–297 (VKAYYMRARAHAEVWNAEEAKADLEKVLELEPSM).

As to quaternary structure, interacts with NUB1.

The protein localises to the cytoplasm. It localises to the nucleus. Its function is as follows. May be important in protein trafficking and/or protein folding and stabilization. In Mus musculus (Mouse), this protein is Aryl-hydrocarbon-interacting protein-like 1 (Aipl1).